A 174-amino-acid chain; its full sequence is Shikimate kinase 2 (174 aa).

12-17 contacts ATP; the sequence is GCGKTT. The Mg(2+) site is built by Thr16 and Asp32. Asp34, Arg58, and Gly79 together coordinate substrate. The tract at residues 112–126 is LID domain; it reads QAAPEEDLRPTLTGK. Residue Arg120 participates in ATP binding. Residue Arg139 coordinates substrate.

This sequence belongs to the shikimate kinase family. AroL subfamily. As to quaternary structure, monomer. The cofactor is Mg(2+).

The protein resides in the cytoplasm. The catalysed reaction is shikimate + ATP = 3-phosphoshikimate + ADP + H(+). The protein operates within metabolic intermediate biosynthesis; chorismate biosynthesis; chorismate from D-erythrose 4-phosphate and phosphoenolpyruvate: step 5/7. Catalyzes the specific phosphorylation of the 3-hydroxyl group of shikimic acid using ATP as a cosubstrate. This is Shikimate kinase 2 from Escherichia coli O7:K1 (strain IAI39 / ExPEC).